Reading from the N-terminus, the 482-residue chain is Zinc finger CCCH domain-containing protein 40 (482 aa).

The C3H1-type zinc finger occupies R157 to P184. In terms of domain architecture, RRM spans R228–P301. Composition is skewed to low complexity over residues S329–Q347 and P389–Y428. The segment at S329–N482 is disordered. Residues M429–Q446 show a composition bias toward pro residues. Over residues P452–A466 the composition is skewed to low complexity. Residues V473 to N482 show a composition bias toward pro residues.

In Oryza sativa subsp. japonica (Rice), this protein is Zinc finger CCCH domain-containing protein 40.